Here is a 728-residue protein sequence, read N- to C-terminus: NF-kappa-B inhibitor zeta (728 aa).

The segment at 45–107 (GAGDTGYLSA…PHMGVGRQQR (63 aa)) is disordered. Residues 53-82 (SAVPSAPGSPGSDSSDFSSTSSVSSCGAVE) show a composition bias toward low complexity. Positions 83 to 96 (SRPRGGARAERPQV) are enriched in basic and acidic residues. The OCA domain occupies 107 to 129 (RGPFQGVRVKNSVKELLLHIRSN). The short motif at 163 to 178 (KRKGPDPLSDGPVCKR) is the Nuclear localization signal element. 2 stretches are compositionally biased toward polar residues: residues 241–250 (PTVPQNSPRD) and 268–288 (QPFQ…YQYS). The disordered stretch occupies residues 241–334 (PTVPQNSPRD…SQSPKYDSNL (94 aa)). Over residues 303-315 (QQQHQQNYPHNSP) the composition is skewed to low complexity. A compositionally biased stretch (polar residues) spans 316–330 (LQFSPYSRMSQSPKY). Residues 329 to 403 (KYDSNLFDTH…VGVHDVGSHS (75 aa)) are required for transcriptional activity. The interval 414-728 (MGSPMNTTQL…KSIQQRAPPY (315 aa)) is interaction with NFKB1/p50. 7 ANK repeats span residues 453 to 482 (DGDT…ALHM), 489 to 518 (NGQS…QVNT), 522 to 551 (WGRT…RSNQ), 561 to 589 (DGLT…SHSP), 591 to 617 (VQDL…AVEA), 622 to 651 (SGRT…CLSF), and 658 to 691 (NGNT…DPST).

In terms of assembly, interacts with NFKB1/p50. Interacts with RELA. Interacts with AKIRIN2. In terms of tissue distribution, expressed in kidney, liver, lung and heart. Expressed at very low levels in skeletal muscle, spleen and brain.

The protein localises to the nucleus. Involved in regulation of NF-kappa-B transcription factor complexes. Inhibits NF-kappa-B activity without affecting its nuclear translocation upon stimulation. Inhibits DNA-binding of RELA and NFKB1/p50, and of the NF-kappa-B p65-p50 heterodimer and the NF-kappa-B p50-p50 homodimer. Also seems to activate NF-kappa-B-mediated transcription. In vitro, upon association with NFKB1/p50 has transcriptional activation activity and, together with NFKB1/p50 and RELA, is recruited to LCN2 promoters. Promotes transcription of LCN2 and DEFB4. Is recruited to IL-6 promoters and activates IL-6 but decreases TNF-alpha production in response to LPS. Seems to be involved in the induction of inflammatory genes activated through TLR/IL-1 receptor signaling. Involved in the induction of T helper 17 cells (Th17) differentiation upon recognition of antigen by T cell antigen receptor (TCR). The chain is NF-kappa-B inhibitor zeta (Nfkbiz) from Mus musculus (Mouse).